A 299-amino-acid chain; its full sequence is Coenzyme PQQ synthesis protein B (299 aa).

This sequence belongs to the PqqB family.

The protein operates within cofactor biosynthesis; pyrroloquinoline quinone biosynthesis. In terms of biological role, may be involved in the transport of PQQ or its precursor to the periplasm. In Methylorubrum extorquens (strain CM4 / NCIMB 13688) (Methylobacterium extorquens), this protein is Coenzyme PQQ synthesis protein B.